The sequence spans 146 residues: U1 small nuclear ribonucleoprotein C (146 aa).

Residues 4–36 form a Matrin-type zinc finger; that stretch reads YYCDYCDTYLTHDSPSVRKTHCTGRKHRDNVKF. The tract at residues 64-96 is disordered; it reads NNPFAGGPSSAPPKPSGVSIPPPNMGAPPRPGM. Residues 73-96 show a composition bias toward pro residues; it reads SAPPKPSGVSIPPPNMGAPPRPGM.

The protein belongs to the U1 small nuclear ribonucleoprotein C family. As to quaternary structure, U1 snRNP is composed of the 7 core Sm proteins B/B', D1, D2, D3, E, F and G that assemble in a heptameric protein ring on the Sm site of the small nuclear RNA to form the core snRNP, and at least 3 U1 snRNP-specific proteins U1-70K, U1-A and U1-C. U1-C interacts with U1 snRNA and the 5' splice-site region of the pre-mRNA.

The protein resides in the nucleus. Functionally, component of the spliceosomal U1 snRNP, which is essential for recognition of the pre-mRNA 5' splice-site and the subsequent assembly of the spliceosome. U1-C is directly involved in initial 5' splice-site recognition for both constitutive and regulated alternative splicing. The interaction with the 5' splice-site seems to precede base-pairing between the pre-mRNA and the U1 snRNA. Stimulates commitment or early (E) complex formation by stabilizing the base pairing of the 5' end of the U1 snRNA and the 5' splice-site region. In Drosophila pseudoobscura pseudoobscura (Fruit fly), this protein is U1 small nuclear ribonucleoprotein C.